We begin with the raw amino-acid sequence, 455 residues long: tRNA modification GTPase MnmE (455 aa).

(6S)-5-formyl-5,6,7,8-tetrahydrofolate is bound by residues arginine 24, glutamate 81, and lysine 121. The TrmE-type G domain maps to 217 to 378; the sequence is GMKVVIAGRP…LKEHLKDIMG (162 aa). Asparagine 227 is a binding site for K(+). GTP is bound by residues 227 to 232, 246 to 252, 271 to 274, and 336 to 339; these read NAGKSS, TDIAGTT, DTAG, and NKAD. Serine 231 provides a ligand contact to Mg(2+). Residues threonine 246, isoleucine 248, and threonine 251 each contribute to the K(+) site. Threonine 252 contributes to the Mg(2+) binding site. Lysine 455 contributes to the (6S)-5-formyl-5,6,7,8-tetrahydrofolate binding site.

This sequence belongs to the TRAFAC class TrmE-Era-EngA-EngB-Septin-like GTPase superfamily. TrmE GTPase family. As to quaternary structure, homodimer. Heterotetramer of two MnmE and two MnmG subunits. K(+) serves as cofactor.

Its subcellular location is the cytoplasm. Its function is as follows. Exhibits a very high intrinsic GTPase hydrolysis rate. Involved in the addition of a carboxymethylaminomethyl (cmnm) group at the wobble position (U34) of certain tRNAs, forming tRNA-cmnm(5)s(2)U34. The protein is tRNA modification GTPase MnmE of Psychromonas ingrahamii (strain DSM 17664 / CCUG 51855 / 37).